Consider the following 305-residue polypeptide: uncharacterized protein (305 aa).

This is an uncharacterized protein from Acanthamoeba polyphaga mimivirus (APMV).